A 362-amino-acid chain; its full sequence is DNA replication and repair protein RecF (362 aa).

Residue 30 to 37 coordinates ATP; sequence GPNGSGKT.

This sequence belongs to the RecF family.

Its subcellular location is the cytoplasm. The RecF protein is involved in DNA metabolism; it is required for DNA replication and normal SOS inducibility. RecF binds preferentially to single-stranded, linear DNA. It also seems to bind ATP. In Proteus mirabilis (strain HI4320), this protein is DNA replication and repair protein RecF.